The chain runs to 61 residues: MAKKSLKVKAARVAKFSTRAYTRCQLCGRPHAVLRKFEICRICFRKLAHEGKIPGLKKASW.

Residues Cys-24, Cys-27, Cys-40, and Cys-43 each coordinate Zn(2+).

The protein belongs to the universal ribosomal protein uS14 family. Zinc-binding uS14 subfamily. In terms of assembly, part of the 30S ribosomal subunit. Contacts proteins S3 and S10. Zn(2+) serves as cofactor.

Binds 16S rRNA, required for the assembly of 30S particles and may also be responsible for determining the conformation of the 16S rRNA at the A site. The sequence is that of Small ribosomal subunit protein uS14 from Mycoplasmopsis pulmonis (strain UAB CTIP) (Mycoplasma pulmonis).